Reading from the N-terminus, the 1257-residue chain is Liprin-alpha-2 (1257 aa).

Disordered regions lie at residues 1–29 (MMCE…DSDS), 231–265 (ASSE…DSTD), and 438–463 (EGQL…EHNK). Low complexity predominate over residues 16–26 (SQRGSQSSGSD). Coiled coils occupy residues 29–154 (SHFE…SLRM), 185–541 (KALD…SLIE), and 643–695 (HSDA…GLNL). The residue at position 236 (serine 236) is a Phosphoserine. Phosphothreonine is present on threonine 237. The segment covering 238 to 256 (ESEHLEGMEPGQKVHEKRL) has biased composition (basic and acidic residues). A Phosphoserine modification is found at serine 239. Serine 687 and serine 689 each carry phosphoserine. Composition is skewed to low complexity over residues 709–725 (TASS…HSTP) and 798–813 (SSLS…GLGS). Disordered stretches follow at residues 709-738 (TASS…EMDR) and 790-834 (SSYH…KSSI). Phosphoserine occurs at positions 817 and 820. 3 SAM domains span residues 898–964 (WDGP…MVSL), 1020–1084 (NHEW…LKRL), and 1108–1177 (WSND…LLAL). Residues 1081–1107 (LKRLNYDRKELERRREASQHEIKDVLV) adopt a coiled-coil conformation.

Belongs to the liprin family. Liprin-alpha subfamily. As to quaternary structure, forms homodimers and heterodimers with liprins-alpha and liprins-beta. Interacts with the second PTPase domain of PTPRD, PTPRF and PTPRS. Interacts with KIF1A; the interaction decreases in presence of calcium. In terms of tissue distribution, expressed only in brain.

It is found in the cytoplasm. It localises to the cell surface. Its subcellular location is the cell projection. The protein localises to the dendritic spine. Its function is as follows. Alters PTPRF cellular localization and induces PTPRF clustering. May regulate the disassembly of focal adhesions. May localize receptor-like tyrosine phosphatases type 2A at specific sites on the plasma membrane, possibly regulating their interaction with the extracellular environment and their association with substrates. In neuronal cells, is a scaffolding protein in the dendritic spines which acts as immobile postsynaptic post able to recruit KIF1A-driven dense core vesicles to dendritic spines. This Homo sapiens (Human) protein is Liprin-alpha-2 (PPFIA2).